We begin with the raw amino-acid sequence, 147 residues long: Hemoglobin subunit beta-1 (147 aa).

The residue at position 2 (V2) is an N-acetylvaline. The 145-residue stretch at H3–H147 folds into the Globin domain. N6-succinyllysine is present on K18. Phosphoserine occurs at positions 45, 51, and 53. K60 is modified (N6-succinyllysine). Heme b contacts are provided by H64 and H93. Residue R105 is modified to Asymmetric dimethylarginine. Position 124 is a phosphothreonine (T124).

Belongs to the globin family. In terms of assembly, heterotetramer of two alpha chains and two beta chains. In terms of tissue distribution, red blood cells.

Involved in oxygen transport from the lung to the various peripheral tissues. This is Hemoglobin subunit beta-1 (Hbb) from Rattus norvegicus (Rat).